The sequence spans 498 residues: ATP synthase subunit beta, chloroplastic (498 aa).

172 to 179 (GGAGVGKT) contacts ATP.

The protein belongs to the ATPase alpha/beta chains family. In terms of assembly, F-type ATPases have 2 components, CF(1) - the catalytic core - and CF(0) - the membrane proton channel. CF(1) has five subunits: alpha(3), beta(3), gamma(1), delta(1), epsilon(1). CF(0) has four main subunits: a(1), b(1), b'(1) and c(9-12).

The protein resides in the plastid. It is found in the chloroplast thylakoid membrane. It carries out the reaction ATP + H2O + 4 H(+)(in) = ADP + phosphate + 5 H(+)(out). In terms of biological role, produces ATP from ADP in the presence of a proton gradient across the membrane. The catalytic sites are hosted primarily by the beta subunits. This is ATP synthase subunit beta, chloroplastic from Idiospermum australiense (Ribbonwood tree).